Here is a 580-residue protein sequence, read N- to C-terminus: Putative multidrug export ATP-binding/permease protein YgaD (580 aa).

Over 1 to 17 (MGVMKRYMQFVKPYKKQ) the chain is Cytoplasmic. Residues 18 to 38 (IFVTVLIGIVKFSIPLALPLL) traverse the membrane as a helical segment. The ABC transmembrane type-1 domain occupies 19–307 (FVTVLIGIVK…LINSSTTLTQ (289 aa)). The Extracellular segment spans residues 39-57 (LKYVVDDIIQGGGTASDKT). A helical membrane pass occupies residues 58-78 (TSLFTIMAIMFALFLILRPPV). The Cytoplasmic portion of the chain corresponds to 79 to 135 (EYYRQYFAQWTASKVLYDIRAKLFDHIQKLSLRFYANTRTGEVISRVINDVEQTKDF). Residues 136-156 (VITGLMNIWLDMLTILIVISI) form a helical membrane-spanning segment. Residues 157–163 (MLTLDVK) are Extracellular-facing. The chain crosses the membrane as a helical span at residues 164–184 (LTLISIVLFPLYGISVKYFYG). Over 185-243 (RLRKLTRERSQALAQVQGHLHERIQGMPVIRSFAIEDHEQAQFNEKNGHFLDKAIRHTN) the chain is Cytoplasmic. A helical transmembrane segment spans residues 244–263 (WNAKTFAVVNTITDLAPLIV). At 264–268 (IACAG) the chain is on the extracellular side. A helical membrane pass occupies residues 269-288 (YFVINGPLTVGTMVAFVGYI). At 289-580 (DRMYNPVRRL…KHLFTIQNLN (292 aa)) the chain is on the cytoplasmic side. The region spanning 341–576 (VEFQNVSFQY…ESQYKHLFTI (236 aa)) is the ABC transporter domain. 375–382 (GMSGGGKS) lines the ATP pocket.

This sequence belongs to the ABC transporter superfamily. Homodimer.

The protein localises to the cell membrane. Its function is as follows. May be involved in multidrug export. Transmembrane domains (TMD) form a pore in the cell membrane and the ATP-binding domain (NBD) is responsible for energy generation. The polypeptide is Putative multidrug export ATP-binding/permease protein YgaD (ygaD) (Bacillus subtilis (strain 168)).